The primary structure comprises 419 residues: Histidine--tRNA ligase (419 aa).

This sequence belongs to the class-II aminoacyl-tRNA synthetase family. Homodimer.

The protein resides in the cytoplasm. The catalysed reaction is tRNA(His) + L-histidine + ATP = L-histidyl-tRNA(His) + AMP + diphosphate + H(+). The polypeptide is Histidine--tRNA ligase (Thiobacillus denitrificans (strain ATCC 25259 / T1)).